Consider the following 425-residue polypeptide: D-tagatose 6-phosphate 4-epimerase (425 aa).

This sequence belongs to the GatZ/KbaZ family.

It catalyses the reaction keto-D-tagatose 6-phosphate = keto-D-fructose 6-phosphate. Its pathway is carbohydrate metabolism. In terms of biological role, involved in galactitol and D-altritol catabolism. Catalyzes the epimerization of D-tagatose 6-phosphate to D-fructose 6-phosphate. The polypeptide is D-tagatose 6-phosphate 4-epimerase (Agrobacterium fabrum (strain C58 / ATCC 33970) (Agrobacterium tumefaciens (strain C58))).